Reading from the N-terminus, the 331-residue chain is 6-phosphogluconolactonase (331 aa).

It belongs to the cycloisomerase 2 family.

The catalysed reaction is 6-phospho-D-glucono-1,5-lactone + H2O = 6-phospho-D-gluconate + H(+). The protein operates within carbohydrate degradation; pentose phosphate pathway; D-ribulose 5-phosphate from D-glucose 6-phosphate (oxidative stage): step 2/3. In terms of biological role, catalyzes the hydrolysis of 6-phosphogluconolactone to 6-phosphogluconate. The protein is 6-phosphogluconolactonase of Klebsiella pneumoniae subsp. pneumoniae (strain ATCC 700721 / MGH 78578).